A 215-amino-acid polypeptide reads, in one-letter code: Elongation factor Ts (215 aa).

Residues 80–83 (TDFV) form an involved in Mg(2+) ion dislocation from EF-Tu region.

This sequence belongs to the EF-Ts family.

Its subcellular location is the cytoplasm. Its function is as follows. Associates with the EF-Tu.GDP complex and induces the exchange of GDP to GTP. It remains bound to the aminoacyl-tRNA.EF-Tu.GTP complex up to the GTP hydrolysis stage on the ribosome. The chain is Elongation factor Ts from Heliobacterium modesticaldum (strain ATCC 51547 / Ice1).